The chain runs to 141 residues: Hemoglobin subunit alpha (141 aa).

The region spanning 1-141 is the Globin domain; it reads VLSPADKSNV…VSTVLTSKYR (141 aa). Ser-3 is modified (phosphoserine). N6-succinyllysine occurs at positions 7 and 11. At Lys-16 the chain carries N6-acetyllysine; alternate. Lys-16 is modified (N6-succinyllysine; alternate). Phosphotyrosine is present on Tyr-24. Ser-35 is modified (phosphoserine). At Lys-40 the chain carries N6-succinyllysine. Phosphoserine is present on Ser-49. His-58 serves as a coordination point for O2. His-87 is a heme b binding site. A Phosphoserine modification is found at Ser-102. Thr-108 is modified (phosphothreonine). Residues Ser-124 and Ser-131 each carry the phosphoserine modification. A phosphothreonine mark is found at Thr-134 and Thr-137. Residue Ser-138 is modified to Phosphoserine.

This sequence belongs to the globin family. Heterotetramer of two alpha chains and two beta chains. Red blood cells.

Its function is as follows. Involved in oxygen transport from the lung to the various peripheral tissues. In terms of biological role, hemopressin acts as an antagonist peptide of the cannabinoid receptor CNR1. Hemopressin-binding efficiently blocks cannabinoid receptor CNR1 and subsequent signaling. The chain is Hemoglobin subunit alpha (HBA) from Mico argentatus (Silvery marmoset).